A 479-amino-acid chain; its full sequence is DNA polymerase IV (479 aa).

The 183-residue stretch at 7–189 (ILHLDMDAFF…MTVRTLPGVG (183 aa)) folds into the UmuC domain. Mg(2+) is bound by residues aspartate 11 and aspartate 105. Glutamate 106 is a catalytic residue. Disordered stretches follow at residues 357–400 (AGDR…GHGW) and 430–479 (DPEL…TSRP). Residues 381 to 396 (AERRWPSGHDVRHTEL) show a composition bias toward basic and acidic residues.

This sequence belongs to the DNA polymerase type-Y family. Monomer. Mg(2+) serves as cofactor.

It is found in the cytoplasm. It catalyses the reaction DNA(n) + a 2'-deoxyribonucleoside 5'-triphosphate = DNA(n+1) + diphosphate. Functionally, poorly processive, error-prone DNA polymerase involved in untargeted mutagenesis. Copies undamaged DNA at stalled replication forks, which arise in vivo from mismatched or misaligned primer ends. These misaligned primers can be extended by PolIV. Exhibits no 3'-5' exonuclease (proofreading) activity. May be involved in translesional synthesis, in conjunction with the beta clamp from PolIII. In Streptomyces coelicolor (strain ATCC BAA-471 / A3(2) / M145), this protein is DNA polymerase IV.